The following is an 827-amino-acid chain: Leucine--tRNA ligase (827 aa).

The 'HIGH' region motif lies at 42 to 52 (PYPSGKLHMGH). Positions 583–587 (KMSKS) match the 'KMSKS' region motif. Lys586 is a binding site for ATP.

The protein belongs to the class-I aminoacyl-tRNA synthetase family.

It is found in the cytoplasm. The enzyme catalyses tRNA(Leu) + L-leucine + ATP = L-leucyl-tRNA(Leu) + AMP + diphosphate. This Pelotomaculum thermopropionicum (strain DSM 13744 / JCM 10971 / SI) protein is Leucine--tRNA ligase.